The sequence spans 277 residues: Zinc finger protein 511 (277 aa).

3 consecutive C2H2-type zinc fingers follow at residues Phe-96–His-121, Asn-123–His-146, and Tyr-160–His-185. Residues Glu-225–Met-244 are disordered.

Belongs to the krueppel C2H2-type zinc-finger protein family.

Its subcellular location is the nucleus. In terms of biological role, may be involved in transcriptional regulation. The protein is Zinc finger protein 511 (znf511) of Danio rerio (Zebrafish).